The primary structure comprises 1112 residues: DNA-directed RNA polymerase subunit beta (1112 aa).

The disordered stretch occupies residues 1087-1112; the sequence is VGGRRTPNRPTYENIGGPREMEFSED.

The protein belongs to the RNA polymerase beta chain family. In cyanobacteria the RNAP catalytic core is composed of 2 alpha, 1 beta, 1 beta', 1 gamma and 1 omega subunit. When a sigma factor is associated with the core the holoenzyme is formed, which can initiate transcription.

It catalyses the reaction RNA(n) + a ribonucleoside 5'-triphosphate = RNA(n+1) + diphosphate. Functionally, DNA-dependent RNA polymerase catalyzes the transcription of DNA into RNA using the four ribonucleoside triphosphates as substrates. The sequence is that of DNA-directed RNA polymerase subunit beta from Gloeobacter violaceus (strain ATCC 29082 / PCC 7421).